Reading from the N-terminus, the 132-residue chain is MSTERKGKIGVAHIYSSFNDTIVHITDITGAETLARYSGGMFVDADRLEGSPYAALKAAMAAAKEAQRKGITHLIVKVRAPGGIKSRIPGPGATAAIRGLSRSQLTLIRVEDVTPIPHDGCRRPHGRRGRRV.

It belongs to the universal ribosomal protein uS11 family. In terms of assembly, part of the 30S ribosomal subunit.

Located on the platform of the 30S subunit. This Korarchaeum cryptofilum (strain OPF8) protein is Small ribosomal subunit protein uS11 (rps11).